Reading from the N-terminus, the 283-residue chain is Polyamine aminopropyltransferase (283 aa).

One can recognise a PABS domain in the interval 5–241 (NNWYIEHFER…GWWSVTLARK (237 aa)). An S-methyl-5'-thioadenosine-binding site is contributed by Gln-35. The spermidine site is built by His-66 and Asp-90. Residues Asp-110 and 141–142 (DG) contribute to the S-methyl-5'-thioadenosine site. The Proton acceptor role is filled by Asp-160. A spermidine-binding site is contributed by 160-163 (DSTD). Pro-167 lines the S-methyl-5'-thioadenosine pocket.

Belongs to the spermidine/spermine synthase family. Homodimer or homotetramer.

The protein localises to the cytoplasm. It carries out the reaction S-adenosyl 3-(methylsulfanyl)propylamine + putrescine = S-methyl-5'-thioadenosine + spermidine + H(+). It functions in the pathway amine and polyamine biosynthesis; spermidine biosynthesis; spermidine from putrescine: step 1/1. Catalyzes the irreversible transfer of a propylamine group from the amino donor S-adenosylmethioninamine (decarboxy-AdoMet) to putrescine (1,4-diaminobutane) to yield spermidine. This Stenotrophomonas maltophilia (strain R551-3) protein is Polyamine aminopropyltransferase.